Reading from the N-terminus, the 215-residue chain is Urease accessory protein UreG (215 aa).

A disordered region spans residues 1–21 (MNAPAPSSARRTKKLPPLRVG). 24 to 31 (GPVGSGKT) contributes to the GTP binding site.

This sequence belongs to the SIMIBI class G3E GTPase family. UreG subfamily. In terms of assembly, homodimer. UreD, UreF and UreG form a complex that acts as a GTP-hydrolysis-dependent molecular chaperone, activating the urease apoprotein by helping to assemble the nickel containing metallocenter of UreC. The UreE protein probably delivers the nickel.

It localises to the cytoplasm. Functionally, facilitates the functional incorporation of the urease nickel metallocenter. This process requires GTP hydrolysis, probably effectuated by UreG. This chain is Urease accessory protein UreG, found in Burkholderia lata (strain ATCC 17760 / DSM 23089 / LMG 22485 / NCIMB 9086 / R18194 / 383).